The sequence spans 161 residues: Nucleotide-binding protein Glov_3198 (161 aa).

It belongs to the YajQ family.

Functionally, nucleotide-binding protein. The protein is Nucleotide-binding protein Glov_3198 of Trichlorobacter lovleyi (strain ATCC BAA-1151 / DSM 17278 / SZ) (Geobacter lovleyi).